The sequence spans 262 residues: Integral membrane protein 2B (262 aa).

At M1–C49 the chain is on the cytoplasmic side. The helical; Signal-anchor for type II membrane protein transmembrane segment at W50–L70 threads the bilayer. Residues Y71 to Q262 are Lumenal-facing. A BRICHOS domain is found at F132 to L226. Disulfide bonds link C159–C218 and C243–C260. N-linked (GlcNAc...) asparagine glycosylation is present at N165.

The protein belongs to the ITM2 family. In terms of assembly, homodimer; disulfide-linked. Expressed in areas of chondro-osteogenic transition and widely in the nervous system.

It is found in the golgi apparatus membrane. The protein localises to the cell membrane. Its subcellular location is the endosome membrane. Its function is as follows. Plays a role in the induction of neurite outgrowth. In Gallus gallus (Chicken), this protein is Integral membrane protein 2B (ITM2B).